The following is a 431-amino-acid chain: Shaggy-related protein kinase beta (431 aa).

Positions 12 to 24 (SGRNFVSSDNVGE) are enriched in polar residues. The interval 12 to 65 (SGRNFVSSDNVGETETPRSKPNQNREETESTETTSYEKDSVSSSENSDHLPKEI) is disordered. Basic and acidic residues-rich tracts occupy residues 26–39 (ETPR…REET) and 46–65 (SYEK…PKEI). Residues 102 to 386 (YRAEHVIGTG…ALEACAHPFF (285 aa)) enclose the Protein kinase domain. ATP is bound by residues 108-116 (IGTGSFGVV) and Lys-131. The active-site Proton acceptor is the Asp-227. At Tyr-262 the chain carries Phosphotyrosine.

Belongs to the protein kinase superfamily. CMGC Ser/Thr protein kinase family. GSK-3 subfamily. In terms of processing, autophosphorylated mainly on threonine and serine residues.

It catalyses the reaction L-seryl-[protein] + ATP = O-phospho-L-seryl-[protein] + ADP + H(+). The enzyme catalyses L-threonyl-[protein] + ATP = O-phospho-L-threonyl-[protein] + ADP + H(+). Functionally, may mediate extracellular signals to regulate transcription in differentiating cells. This is Shaggy-related protein kinase beta from Arabidopsis thaliana (Mouse-ear cress).